The chain runs to 342 residues: Dihydroorotate dehydrogenase (quinone) (342 aa).

FMN-binding positions include 61 to 65 (AGLDK) and T85. K65 is a substrate binding site. Position 110–114 (110–114 (NRMGF)) interacts with substrate. Residues N138 and N171 each contribute to the FMN site. Substrate is bound at residue N171. The Nucleophile role is filled by S174. Substrate is bound at residue N176. FMN is bound by residues K216 and T244. 245 to 246 (NT) provides a ligand contact to substrate. FMN is bound by residues G267, G296, and 317-318 (YS).

This sequence belongs to the dihydroorotate dehydrogenase family. Type 2 subfamily. As to quaternary structure, monomer. The cofactor is FMN.

The protein resides in the cell membrane. The catalysed reaction is (S)-dihydroorotate + a quinone = orotate + a quinol. It functions in the pathway pyrimidine metabolism; UMP biosynthesis via de novo pathway; orotate from (S)-dihydroorotate (quinone route): step 1/1. Catalyzes the conversion of dihydroorotate to orotate with quinone as electron acceptor. In Cellvibrio japonicus (strain Ueda107) (Pseudomonas fluorescens subsp. cellulosa), this protein is Dihydroorotate dehydrogenase (quinone).